A 265-amino-acid polypeptide reads, in one-letter code: Gap junction beta-4 protein (265 aa).

The stretch at 2 to 13 (NWGFLQGILSGV) is an intramembrane region. Residues 14–20 (NKYSTAL) are Cytoplasmic-facing. A helical membrane pass occupies residues 21–40 (GRIWLSVVFIFRVLVYVVAA). Topologically, residues 41 to 73 (EEVWDDEQKDFICNTKQPGCPNVCYDEFFPVSH) are extracellular. Disulfide bonds link cysteine 53–cysteine 175, cysteine 60–cysteine 169, and cysteine 64–cysteine 164. A helical membrane pass occupies residues 74–94 (VRLWALQLILVTCPSLLVVMH). Topologically, residues 95–130 (VAYREERERKHRLKHGPDAPALYSNLSKKRGGLWWT) are cytoplasmic. Residues 131–151 (YLLSLIFKAAVDSGFLYIFHC) traverse the membrane as a helical segment. At 152–184 (IYKDYDMPRVVACSVQPCPHTVDCYISRPTEKK) the chain is on the extracellular side. Residues 185–205 (VFTYFMVVTAAICILLNLSEV) traverse the membrane as a helical segment. The Cytoplasmic portion of the chain corresponds to 206 to 265 (AYLVGKRCMEVFRPRRQKTSRRHQLPDTCPPYVISKGHPQDESTVLTKAGMATVDAGVYP).

Belongs to the connexin family. Beta-type (group I) subfamily. In terms of assembly, a hemichannel or connexon is composed of a hexamer of connexins. A functional gap junction is formed by the apposition of two hemichannels. Forms heteromeric channels with GJB2. Detected in adult heart, kidney, skin and cochlea, where it is detected in spiral ganglion, stria vascularis, spiral limbus and spiral ligament (at protein level).

It localises to the cell membrane. Its subcellular location is the cell junction. The protein resides in the gap junction. In terms of biological role, structural component of gap junctions. Gap junctions are dodecameric channels that connect the cytoplasm of adjoining cells. They are formed by the docking of two hexameric hemichannels, one from each cell membrane. Small molecules and ions diffuse from one cell to a neighboring cell via the central pore. In Rattus norvegicus (Rat), this protein is Gap junction beta-4 protein (Gjb4).